The primary structure comprises 381 residues: MSGQDKASQRVLCAMSGGVDSSVTAALLKDAGYQVIGAMMRFWPDDKRVDTFDTCCSPDAAYEARRVAEQVGVPFYLLDYREQFQHHIVGPFLSEYAQGRTPNPCVNCNTKVKFDELVKKAKMLGCRYVATGHYVKRVEREDGSVEFHRGDDPRKDQTYFLWGTPREALPFILFPVGELEKPRVREIAAEKGLLTARKPESQNICFVPGKVQDFVAEHLPQRQGLIREIRTGEVVGEHLGTQFYTLGQKKGLGLYQTHRVRHVVHLDPETNTVWVGDYEDCLWTGLKAEGANYLLDLAELPREVEVQVRYRTKPVRATVLHADEHGFELQFEEPQFAVAPGQSAVLYAGTRLLGGGLIADHARNLPVVPADQAAQPVPVSG.

ATP contacts are provided by residues 14–21 (AMSGGVDS) and methionine 40. The active-site Nucleophile is cysteine 108. Cysteines 108 and 205 form a disulfide. Glycine 132 contacts ATP. Residues 155–157 (KDQ) form an interaction with tRNA region. Cysteine 205 acts as the Cysteine persulfide intermediate in catalysis. Residues 309–310 (RY) are interaction with tRNA.

It belongs to the MnmA/TRMU family.

The protein resides in the cytoplasm. It catalyses the reaction S-sulfanyl-L-cysteinyl-[protein] + uridine(34) in tRNA + AH2 + ATP = 2-thiouridine(34) in tRNA + L-cysteinyl-[protein] + A + AMP + diphosphate + H(+). Functionally, catalyzes the 2-thiolation of uridine at the wobble position (U34) of tRNA, leading to the formation of s(2)U34. This Deinococcus geothermalis (strain DSM 11300 / CIP 105573 / AG-3a) protein is tRNA-specific 2-thiouridylase MnmA.